Consider the following 286-residue polypeptide: 4-diphosphocytidyl-2-C-methyl-D-erythritol kinase (286 aa).

Residue lysine 12 is part of the active site. Position 96-106 (96-106 (PHGAGLGGGSA)) interacts with ATP. The active site involves aspartate 138.

This sequence belongs to the GHMP kinase family. IspE subfamily.

The catalysed reaction is 4-CDP-2-C-methyl-D-erythritol + ATP = 4-CDP-2-C-methyl-D-erythritol 2-phosphate + ADP + H(+). It participates in isoprenoid biosynthesis; isopentenyl diphosphate biosynthesis via DXP pathway; isopentenyl diphosphate from 1-deoxy-D-xylulose 5-phosphate: step 3/6. Catalyzes the phosphorylation of the position 2 hydroxy group of 4-diphosphocytidyl-2C-methyl-D-erythritol. This chain is 4-diphosphocytidyl-2-C-methyl-D-erythritol kinase, found in Nitratidesulfovibrio vulgaris (strain ATCC 29579 / DSM 644 / CCUG 34227 / NCIMB 8303 / VKM B-1760 / Hildenborough) (Desulfovibrio vulgaris).